Consider the following 158-residue polypeptide: Urease accessory protein UreE (158 aa).

A disordered region spans residues 133–158 (PEGGAYQAHSHDGHSHHQGHTHDHHD). The span at 141 to 158 (HSHDGHSHHQGHTHDHHD) shows a compositional bias: basic and acidic residues.

Belongs to the UreE family.

It is found in the cytoplasm. Involved in urease metallocenter assembly. Binds nickel. Probably functions as a nickel donor during metallocenter assembly. In Chelativorans sp. (strain BNC1), this protein is Urease accessory protein UreE.